A 54-amino-acid chain; its full sequence is Large ribosomal subunit protein bL33A (54 aa).

It belongs to the bacterial ribosomal protein bL33 family.

The protein is Large ribosomal subunit protein bL33A of Mesoplasma florum (strain ATCC 33453 / NBRC 100688 / NCTC 11704 / L1) (Acholeplasma florum).